The chain runs to 590 residues: Multidrug resistance ABC transporter ATP-binding and permease protein (590 aa).

The next 6 membrane-spanning stretches (helical) occupy residues 35–55 (YLFFIIGILAGIVGTLIQLQV), 79–99 (IALYIGSAAVSAIAAIVLGIF), 150–170 (IPQAFTSILLLVGSIVFMLQM), 176–196 (LAMIIAVPVVMLIMFPIMTFG), 261–281 (VMMLSMMLMIFGLLAYGIYLI), and 292–312 (LGMMMYLMNLIGAVPTVATFF). Residues 38-317 (FIIGILAGIV…VATFFTELAK (280 aa)) form the ABC transmembrane type-1 domain. The 236-residue stretch at 349–584 (LSARHVDFAY…HPLYAKYVSE (236 aa)) folds into the ABC transporter domain. 382-389 (GPSGGGKS) is an ATP binding site.

Belongs to the ABC transporter superfamily. Multidrug exporter LmrA (TC 3.A.1.117.1) family. Homodimer.

The protein resides in the cell membrane. The enzyme catalyses ATP + H2O + xenobioticSide 1 = ADP + phosphate + xenobioticSide 2.. Efflux transporter for a variety of amphiphilic cationic compounds, including antibiotics. This is Multidrug resistance ABC transporter ATP-binding and permease protein (lmrA) from Lactococcus lactis subsp. lactis (strain IL1403) (Streptococcus lactis).